The following is a 595-amino-acid chain: Beta-(1--&gt;2)glucan export ATP-binding/permease protein NdvA (595 aa).

A run of 5 helical transmembrane segments spans residues 21-41 (FLLICTANITLAIITIAEPIL), 56-76 (LVTLAVWMCFGISNIIAYVLV), 129-149 (IWLEFMRQHLSTFVALFVLVP), 158-178 (LSIVLMVLAILYILIARLVMQ), and 252-272 (ISIVCVLLLGAFFVIKGQLSV). The ABC transmembrane type-1 domain maps to 21–301 (FLLICTANIT…ISGFINLAVS (281 aa)). One can recognise an ABC transporter domain in the interval 335-569 (IQFHHVTYEF…DGHFYKLLKA (235 aa)). 368–375 (GPTGAGKT) provides a ligand contact to ATP.

It belongs to the ABC transporter superfamily. Beta-(1--&gt;2)glucan exporter (TC 3.A.1.108.1) family. As to quaternary structure, homodimer.

Its subcellular location is the cell inner membrane. It catalyses the reaction [(1-&gt;2)-beta-D-glucosyl](n)(in) + ATP + H2O = [(1-&gt;2)-beta-D-glucosyl](n)(out) + ADP + phosphate + H(+). Functionally, involved in beta-(1--&gt;2)glucan export. Transmembrane domains (TMD) form a pore in the inner membrane and the ATP-binding domain (NBD) is responsible for energy generation. This is Beta-(1--&gt;2)glucan export ATP-binding/permease protein NdvA from Bartonella bacilliformis (strain ATCC 35685 / KC583 / Herrer 020/F12,63).